A 1189-amino-acid polypeptide reads, in one-letter code: Increased DNA methylation 1 (1189 aa).

2 disordered regions span residues 475–498 and 523–597; these read KNLHRRSKKISDIKPASLDQHDSL and SRDE…CRLL. The segment covering 523–532 has biased composition (basic and acidic residues); it reads SRDERLRNEK. Basic residues-rich tracts occupy residues 541-550 and 565-590; these read KKGRKKARKH and NKGKFSRSSQKKKTQKPKARTKKRNN. Residues 726–771 form a PHD-type 1 zinc finger; sequence DDSCGVCGDGGELICCDNCPSTFHQACLSMQVLPEGSWYCSSCTCW. The segment at 767 to 823 adopts a PHD-type 2; degenerate zinc-finger fold; that stretch reads SCTCWICSELVSDNAERSQDFKCSQCAHKYHGTCLQGISKRRKLFPETYFCGKNCEK. Positions 879–1024 constitute an N-acetyltransferase domain; it reads MEESFLSMVD…GTTLLKKTLY (146 aa). The segment at 1031–1157 is disordered; that stretch reads TMKGVCLSKE…SSSSAALEEV (127 aa). Basic and acidic residues-rich tracts occupy residues 1038-1050, 1102-1114, and 1129-1145; these read SKERNNPSNKEAD, NPSRDSNANDRPN, and CLQKDVSKLSEEGKETT. Residues 1147–1157 show a composition bias toward low complexity; that stretch reads ASSSSAALEEV.

Interacts (via N-terminus) with IDM2. Interacts with IMD3. Part of a complex made of MBD7, IDM1, IDM2 and IDM3. As to expression, expressed in cotyledons and hypocotyls in young seedlings.

It is found in the nucleus. Its function is as follows. Histone H3 acetyltransferase that binds methylated DNA at chromatin sites lacking histone H3K4 di- or trimethylation and catalyzes H3K18 and H3K23 acetylation. Prevents the transcriptional silencing of transgenes and of some endogenous genes. Requires the presence of IDM2 for efficient H3K18 acetylation, but not for H3K23 acetylation. This chain is Increased DNA methylation 1, found in Arabidopsis thaliana (Mouse-ear cress).